Reading from the N-terminus, the 212-residue chain is MRKYIFIILIAVLLIGVNIKKIAAAANIDRHTNSTLGIDLSVGIPIFYNDLSKAYPTNLYPGGIGAIKYQYHILNNLAIGLELRYMFNFDINHSFNILNPDSSVGKIFYSVPITFSINYIFDIGELFQIPVFTNIGFSLNTYGDRNNNITNLRTFDALPTISFGSGILWNFNYKWAFGATASWWMMFEFGNSAKMAHFALVSLSVTVNVNKL.

A helical transmembrane segment spans residues 5 to 25; it reads IFIILIAVLLIGVNIKKIAAA.

It localises to the membrane. This is an uncharacterized protein from Borreliella burgdorferi (strain ATCC 35210 / DSM 4680 / CIP 102532 / B31) (Borrelia burgdorferi).